The primary structure comprises 659 residues: Centrosomal protein of 76 kDa (659 aa).

Residues Ser75 and Ser83 each carry the phosphoserine modification.

This sequence belongs to the CEP76 family. Interacts with CCP110 and CEP97.

The protein resides in the cytoplasm. The protein localises to the cytoskeleton. It localises to the microtubule organizing center. Its subcellular location is the centrosome. It is found in the centriole. Its function is as follows. Centrosomal protein involved in regulation of centriole duplication. Required to limit centriole duplication to once per cell cycle by preventing centriole reduplication. In Homo sapiens (Human), this protein is Centrosomal protein of 76 kDa (CEP76).